We begin with the raw amino-acid sequence, 70 residues long: ATP synthase subunit c (70 aa).

2 helical membrane passes run 4–24 and 45–65; these read IAAA…NGLI and IMFI…VIAF.

This sequence belongs to the ATPase C chain family. In terms of assembly, F-type ATPases have 2 components, F(1) - the catalytic core - and F(0) - the membrane proton channel. F(1) has five subunits: alpha(3), beta(3), gamma(1), delta(1), epsilon(1). F(0) has three main subunits: a(1), b(2) and c(10-14). The alpha and beta chains form an alternating ring which encloses part of the gamma chain. F(1) is attached to F(0) by a central stalk formed by the gamma and epsilon chains, while a peripheral stalk is formed by the delta and b chains.

Its subcellular location is the cell membrane. In terms of biological role, f(1)F(0) ATP synthase produces ATP from ADP in the presence of a proton or sodium gradient. F-type ATPases consist of two structural domains, F(1) containing the extramembraneous catalytic core and F(0) containing the membrane proton channel, linked together by a central stalk and a peripheral stalk. During catalysis, ATP synthesis in the catalytic domain of F(1) is coupled via a rotary mechanism of the central stalk subunits to proton translocation. Its function is as follows. Key component of the F(0) channel; it plays a direct role in translocation across the membrane. A homomeric c-ring of between 10-14 subunits forms the central stalk rotor element with the F(1) delta and epsilon subunits. This Staphylococcus haemolyticus (strain JCSC1435) protein is ATP synthase subunit c.